The primary structure comprises 766 residues: Phospholipid phosphatase-related protein type 4 (766 aa).

Residue Ser-37 is modified to Phosphoserine. The next 4 membrane-spanning stretches (helical) occupy residues 68–88 (LPCF…SLYF), 120–140 (AIPF…TIMV), 179–199 (FVGV…IIQL), and 248–268 (SFPS…SMYF). A glycan (N-linked (GlcNAc...) asparagine) is linked at Asn-269. 2 helical membrane passes run 277–297 (KLLK…CGLT) and 309–329 (VYCG…YAVG). Ser-347 is modified (phosphoserine). Asn-363 carries N-linked (GlcNAc...) asparagine glycosylation. Residue Ser-386 is modified to Phosphoserine. A glycan (N-linked (GlcNAc...) asparagine) is linked at Asn-433. Ser-439 bears the Phosphoserine mark. Disordered stretches follow at residues 454-503 (SKNE…GNQY) and 510-529 (TVPG…IQSR). Asn-456 carries an N-linked (GlcNAc...) asparagine glycan. Phosphoserine occurs at positions 462 and 474. Residues Asn-515 and Asn-545 are each glycosylated (N-linked (GlcNAc...) asparagine). Phosphoserine is present on Ser-608. 3 disordered regions span residues 634–654 (PIIQ…KWKA), 672–705 (DSES…GITT), and 741–766 (PERS…PYKD). Residues 688-702 (RKRKHIDSNEHHHHG) are compositionally biased toward basic residues. The span at 743–752 (RSNSPENTRN) shows a compositional bias: polar residues.

Belongs to the PA-phosphatase related phosphoesterase family. O-glycosylated. Probably at Ser-347. In terms of tissue distribution, specifically expressed in neurons (at protein level).

It localises to the postsynaptic density membrane. Postsynaptic density membrane protein that indirectly regulates glutamatergic synaptic transmission through lysophosphatidic acid (LPA)-mediated signaling pathways. Binds lysophosphatidic acid (LPA) and mediates its internalization into cells. Could act as receptor or a transporter of this lipid at the post-synaptic membrane. Modulates lysophosphatidic acid (LPA) activity in neuron axonal outgrowth during development by attenuating phospholipid-induced axon collapse. This is Phospholipid phosphatase-related protein type 4 from Rattus norvegicus (Rat).